Here is a 419-residue protein sequence, read N- to C-terminus: G protein-activated inward rectifier potassium channel 4 (419 aa).

The segment at 1-24 (MAGDSRNAMNQDMEIGVTPRDPKK) is disordered. Residues 1-86 (MAGDSRNAMN…LFTTLVDLKW (86 aa)) lie on the Cytoplasmic side of the membrane. Serine 5 bears the Phosphoserine mark. Residues 87–111 (RFNLLVFTMVYTITWLFFGFIWWLI) form a helical membrane-spanning segment. At 112 to 135 (AYIRGDLDHVGDREWIPCVENLSG) the chain is on the extracellular side. Residues 136-147 (FVSAFLFSIETE) constitute an intramembrane region (helical; Pore-forming). Residues 148-154 (TTIGYGF) constitute an intramembrane region (pore-forming). Positions 149–154 (TIGYGF) match the Selectivity filter motif. The Extracellular segment spans residues 155–163 (RVITEKCPE). The helical transmembrane segment at 164–185 (GIVLLLVQAILGSIVNAFMVGC) threads the bilayer. At 186–419 (MFVKISQPKK…SGSQETKDSA (234 aa)) the chain is on the cytoplasmic side. The interval 381–419 (PSPPLPGGCVGAELGAEAEQEGEEEPEGLSGSQETKDSA) is disordered. A compositionally biased stretch (acidic residues) spans 396–407 (AEAEQEGEEEPE).

Belongs to the inward rectifier-type potassium channel (TC 1.A.2.1) family. KCNJ5 subfamily. Associates with KCNJ3/GIRK1 or KCNJ6/GIRK2 to form a G-protein-activated heteromultimer pore-forming unit. The resulting inward current is much larger.

It is found in the membrane. The catalysed reaction is K(+)(in) = K(+)(out). Its activity is regulated as follows. Heteromultimer composed of KCNJ3/GIRK1 and KCNJ5/GIRK4 is activated by phosphatidylinositol 4,5 biphosphate (PtdIns(4,5)P2). Its function is as follows. Inward rectifier potassium channels are characterized by a greater tendency to allow potassium to flow into the cell rather than out of it. Their voltage dependence is regulated by the concentration of extracellular potassium; as external potassium is raised, the voltage range of the channel opening shifts to more positive voltages. The inward rectification is mainly due to the blockage of outward current by internal magnesium. This receptor plays a crucial role in regulating the heartbeat. Can be blocked by external barium. This potassium channel is controlled by G proteins. The polypeptide is G protein-activated inward rectifier potassium channel 4 (KCNJ5) (Bos taurus (Bovine)).